Reading from the N-terminus, the 297-residue chain is N-acetylneuraminate lyase (297 aa).

Residues Ser-47 and Thr-48 each contribute to the aceneuramate site. The Proton donor role is filled by Tyr-137. The Schiff-base intermediate with substrate role is filled by Lys-165. Thr-167, Gly-189, Asp-191, Glu-192, and Ser-208 together coordinate aceneuramate.

It belongs to the DapA family. NanA subfamily. In terms of assembly, homotetramer.

Its subcellular location is the cytoplasm. The catalysed reaction is aceneuramate = aldehydo-N-acetyl-D-mannosamine + pyruvate. Its pathway is amino-sugar metabolism; N-acetylneuraminate degradation; D-fructose 6-phosphate from N-acetylneuraminate: step 1/5. Its function is as follows. Catalyzes the reversible aldol cleavage of N-acetylneuraminic acid (sialic acid; Neu5Ac) to form pyruvate and N-acetylmannosamine (ManNAc) via a Schiff base intermediate. This chain is N-acetylneuraminate lyase, found in Enterobacter sp. (strain 638).